Here is a 193-residue protein sequence, read N- to C-terminus: Ras-like protein 2 (193 aa).

12-19 (GGGGVGKS) serves as a coordination point for GTP. The short motif at 34–42 (YDPTIEDSY) is the Effector region element. GTP is bound by residues 59–63 (DTAGQ) and 118–121 (NKCD). Position 190 is a cysteine methyl ester (Cys190). Cys190 carries S-geranylgeranyl cysteine lipidation. Residues 191–193 (KLL) constitute a propeptide, removed in mature form.

The protein belongs to the small GTPase superfamily. Ras family.

The protein localises to the cell membrane. The enzyme catalyses GTP + H2O = GDP + phosphate + H(+). Its function is as follows. Ras proteins bind GDP/GTP and possess intrinsic GTPase activity. The chain is Ras-like protein 2 (RAS-2) from Physarum polycephalum (Slime mold).